The following is a 59-amino-acid chain: Large ribosomal subunit protein uL30 (59 aa).

This sequence belongs to the universal ribosomal protein uL30 family. In terms of assembly, part of the 50S ribosomal subunit.

This chain is Large ribosomal subunit protein uL30, found in Shewanella amazonensis (strain ATCC BAA-1098 / SB2B).